A 497-amino-acid chain; its full sequence is Galactose-1-phosphate uridylyltransferase (497 aa).

It belongs to the galactose-1-phosphate uridylyltransferase type 2 family.

Its subcellular location is the cytoplasm. It catalyses the reaction alpha-D-galactose 1-phosphate + UDP-alpha-D-glucose = alpha-D-glucose 1-phosphate + UDP-alpha-D-galactose. The protein operates within carbohydrate metabolism; galactose metabolism. This chain is Galactose-1-phosphate uridylyltransferase, found in Enterococcus faecalis (strain ATCC 700802 / V583).